Here is a 563-residue protein sequence, read N- to C-terminus: Delta-1-pyrroline-5-carboxylate dehydrogenase, mitochondrial (563 aa).

The N-terminal 24 residues, 1-24 (MLLRSAALCRALLARRGRAAGLCR), are a transit peptide targeting the mitochondrion. Position 44 is a phosphoserine (serine 44). Position 52 is an N6-acetyllysine (lysine 52). 5 positions are modified to N6-acetyllysine; alternate: lysine 93, lysine 99, lysine 114, lysine 130, and lysine 175. An N6-succinyllysine; alternate mark is found at lysine 93, lysine 99, lysine 114, lysine 130, and lysine 175. Residues serine 208, lysine 233, and 286–290 (GSVPT) each bind NAD(+). The active-site Proton acceptor is the glutamate 314. The residue at position 318 (lysine 318) is an N6-acetyllysine. Lysine 347 is modified (N6-succinyllysine). The active-site Nucleophile is the cysteine 348. 2 positions are modified to N6-acetyllysine: lysine 365 and lysine 376. The residue at position 395 (lysine 395) is an N6-succinyllysine. An NAD(+)-binding site is contributed by glutamate 447. An N6-acetyllysine; alternate modification is found at lysine 509. The residue at position 509 (lysine 509) is an N6-succinyllysine; alternate. Serine 513 provides a ligand contact to substrate. Lysine 531 carries the post-translational modification N6-acetyllysine.

The protein belongs to the aldehyde dehydrogenase family. Homodimer.

Its subcellular location is the mitochondrion matrix. It catalyses the reaction L-glutamate 5-semialdehyde + NAD(+) + H2O = L-glutamate + NADH + 2 H(+). It functions in the pathway amino-acid degradation; L-proline degradation into L-glutamate; L-glutamate from L-proline: step 2/2. Functionally, irreversible conversion of delta-1-pyrroline-5-carboxylate (P5C), derived either from proline or ornithine, to glutamate. This is a necessary step in the pathway interconnecting the urea and tricarboxylic acid cycles. The preferred substrate is glutamic gamma-semialdehyde, other substrates include succinic, glutaric and adipic semialdehydes. This chain is Delta-1-pyrroline-5-carboxylate dehydrogenase, mitochondrial (ALDH4A1), found in Bos taurus (Bovine).